The sequence spans 1070 residues: Phosphatidylinositol 4,5-bisphosphate 3-kinase catalytic subunit beta isoform (1070 aa).

The PI3K-ABD domain occupies 26–115 (SDGSIPVDFL…LPVLKLVTRS (90 aa)). The PI3K-RBD domain occupies 194–285 (GGKLIVAVHF…RALPHFILVE (92 aa)). At Ser-324 the chain carries Phosphoserine. The C2 PI3K-type domain occupies 327 to 496 (WENNNPFQIV…NATALHVKFP (170 aa)). The Nuclear localization signal motif lies at 410–418 (KVKTKKSTK). The 178-residue stretch at 524 to 701 (ANVSSRGGKK…GVILEAYCRG (178 aa)) folds into the PIK helical domain. Residues 772-1053 (YVEKCKYMDS…KFDEALRESW (282 aa)) form the PI3K/PI4K catalytic domain. The G-loop stretch occupies residues 778-784 (YMDSKMK). Positions 916 to 924 (GIGDRHSDN) are catalytic loop. Residues 935–961 (HIDFGHILGNFKSKFGIKRERVPFILT) form an activation loop region. Ser-1070 is modified (phosphoserine; by autocatalysis).

Belongs to the PI3/PI4-kinase family. As to quaternary structure, heterodimer of a catalytic subunit PIK3CB and a p85 regulatory subunit (PIK3R1, PIK3R2 or PIK3R3). Interaction with PIK3R2 is required for nuclear localization and nuclear export. Part of a complex with PIK3R1 and PTEN. Binding to PTEN may antagonize the lipid kinase activity under normal growth conditions. Part of a complex involved in autophagosome formation composed of PIK3C3 and PIK3R4. Interacts with BECN1, ATG14 and RAB5A. Autophosphorylation at Ser-1070 negatively regulates the phosphatidylinositol-4,5-bisphosphate 3-kinase activity. Expressed ubiquitously.

It is found in the cytoplasm. It localises to the nucleus. The catalysed reaction is a 1,2-diacyl-sn-glycero-3-phospho-(1D-myo-inositol-4,5-bisphosphate) + ATP = a 1,2-diacyl-sn-glycero-3-phospho-(1D-myo-inositol-3,4,5-trisphosphate) + ADP + H(+). It carries out the reaction 1-octadecanoyl-2-(5Z,8Z,11Z,14Z)-eicosatetraenoyl-sn-glycero-3-phospho-1D-myo-inositol 4,5-bisphosphate + ATP = 1-octadecanoyl-2-(5Z,8Z,11Z,14Z-eicosatetraenoyl)-sn-glycero-3-phospho-(1D-myo-inositol 3,4,5-triphosphate) + ADP + H(+). The enzyme catalyses L-seryl-[protein] + ATP = O-phospho-L-seryl-[protein] + ADP + H(+). The protein operates within phospholipid metabolism; phosphatidylinositol phosphate biosynthesis. Phosphoinositide-3-kinase (PI3K) phosphorylates phosphatidylinositol derivatives at position 3 of the inositol ring to produce 3-phosphoinositides. Uses ATP and PtdIns(4,5)P2 (phosphatidylinositol 4,5-bisphosphate) to generate phosphatidylinositol 3,4,5-trisphosphate (PIP3). PIP3 plays a key role by recruiting PH domain-containing proteins to the membrane, including AKT1 and PDPK1, activating signaling cascades involved in cell growth, survival, proliferation, motility and morphology. Involved in the activation of AKT1 upon stimulation by G-protein coupled receptors (GPCRs) ligands such as CXCL12, sphingosine 1-phosphate, and lysophosphatidic acid. May also act downstream receptor tyrosine kinases. Required in different signaling pathways for stable platelet adhesion and aggregation. Plays a role in platelet activation signaling triggered by GPCRs, alpha-IIb/beta-3 integrins (ITGA2B/ ITGB3) and ITAM (immunoreceptor tyrosine-based activation motif)-bearing receptors such as GP6. Regulates the strength of adhesion of ITGA2B/ ITGB3 activated receptors necessary for the cellular transmission of contractile forces. Required for platelet aggregation induced by F2 (thrombin) and thromboxane A2 (TXA2). Has a role in cell survival. May have a role in cell migration. Involved in the early stage of autophagosome formation. Modulates the intracellular level of PtdIns3P (phosphatidylinositol 3-phosphate) and activates PIK3C3 kinase activity. May act as a scaffold, independently of its lipid kinase activity to positively regulate autophagy. May have a role in insulin signaling as scaffolding protein in which the lipid kinase activity is not required. May have a kinase-independent function in regulating cell proliferation and in clathrin-mediated endocytosis. Mediator of oncogenic signal in cell lines lacking PTEN. The lipid kinase activity is necessary for its role in oncogenic transformation. Required for the growth of ERBB2 and RAS driven tumors. Also has a protein kinase activity showing autophosphorylation. In Homo sapiens (Human), this protein is Phosphatidylinositol 4,5-bisphosphate 3-kinase catalytic subunit beta isoform (PIK3CB).